The primary structure comprises 164 residues: MD-2-related lipid-recognition protein 3 (164 aa).

A signal peptide spans 1 to 24; that stretch reads MAMSHVQPMLLLLVSLFFLPALRG.

Interacts with RUB1/NEDD8. Neddylated. In terms of processing, ubiquitinated.

Its subcellular location is the vacuole. It localises to the endoplasmic reticulum. Its function is as follows. May be involved in herbivory-mediated responses. May play a role in herbivory-associated molecular pattern (HAMP) recognition. May function is jasmonate (JA) signaling in response to HAMP. May play a role in defense response against the pathogens Altenaria brassicicola and Pseudomonas syringae. The protein is MD-2-related lipid-recognition protein 3 of Arabidopsis thaliana (Mouse-ear cress).